The following is a 239-amino-acid chain: NADH-quinone oxidoreductase subunit I 1 (239 aa).

4Fe-4S ferredoxin-type domains lie at 81–111 (LVPREDGKPRCVACYMCATICPAQCIYIEAA) and 123–152 (AKFVIDELRCIVCGFCVEACPKDAIRMDSG). Positions 91, 94, 97, 101, 132, 135, 138, and 142 each coordinate [4Fe-4S] cluster.

The protein belongs to the complex I 23 kDa subunit family. In terms of assembly, NDH-1 is composed of 14 different subunits. Subunits NuoA, H, J, K, L, M, N constitute the membrane sector of the complex. Requires [4Fe-4S] cluster as cofactor.

It localises to the cell inner membrane. The catalysed reaction is a quinone + NADH + 5 H(+)(in) = a quinol + NAD(+) + 4 H(+)(out). In terms of biological role, NDH-1 shuttles electrons from NADH, via FMN and iron-sulfur (Fe-S) centers, to quinones in the respiratory chain. The immediate electron acceptor for the enzyme in this species is believed to be ubiquinone. Couples the redox reaction to proton translocation (for every two electrons transferred, four hydrogen ions are translocated across the cytoplasmic membrane), and thus conserves the redox energy in a proton gradient. The chain is NADH-quinone oxidoreductase subunit I 1 from Anaeromyxobacter dehalogenans (strain 2CP-C).